The sequence spans 872 residues: MQPTDPNKFTEKAWEAIAKTPEIAKQHRQQQIETEHLLSALLEQNGLATSIFNKAGASIPRVNDQVNSFIAQQPKLSNPSESIYLGRSLDKLLDNAEIAKSKYGDDYISIEHLMAAYGQDDRLGKNLYREIGLTENKLAEIIKQIRGTQKVTDQNPEGKYESLEKYGRDLTELAREGKLDPVIGRDEEVRRTIQILSRRTKNNPVLIGEPGVGKTAIAEGLAQRIINHDVPESLRDRKLISLDMGALIAGAKYRGEFEERLKAVLKEVTDSQGQIILFIDEIHTVVGAGATQGAMDAGNLLKPMLARGALRCIGATTLDEYRKYIEKDAALERRFQEVLVDEPNVLDTISILRGLKERYEVHHGVKIADSALVAAAMLSNRYISDRFLPDKAIDLVDEAAAKLKMEITSKPEELDEVDRKILQLEMERLSLQRENDSASKERLEKLEKELADFKEEQSKLNGQWQSEKTVIDQIRTVKETIDQVNLEIQQAQRDYDYNKAAELQYGKLTDLQRQVEALETQLAEQQTSGKSLLREEVLESDIAEIISKWTGIPISKLVESEKEKLLHLEDELHSRVIGQDEAVTAVAEAIQRSRAGLSDPNRPTASFIFLGPTGVGKTELAKALAKNLFDTEEALVRIDMSEYMEKHAVSRLMGAPPGYVGYEEGGQLTEAIRRRPYSVILFDEIEKAHGDVFNVMLQILDDGRLTDAQGHVVDFKNTIIIMTSNLGSQYILDVAGDDSRYEEMRSRVMDVMRENFRPEFLNRVDETIIFHGLQKSELRSIVQIQIQSLATRLEEQKLTLKLTDKALDFLAAVGYDPVYGARPLKRAVQKYLETAIAKGILRGDYKPGETIVVDETDERLSFTSLRGDLVIV.

The region spanning 6 to 148 is the Clp R domain; sequence PNKFTEKAWE…AEIIKQIRGT (143 aa). 2 repeat regions span residues 9-73 and 85-148; these read FTEK…IAQQ and LGRS…IRGT. The NBD1 stretch occupies residues 161-342; it reads ESLEKYGRDL…RRFQEVLVDE (182 aa). 208-215 lines the ATP pocket; that stretch reads GEPGVGKT. Positions 343–551 are linker; the sequence is PNVLDTISIL…IAEIISKWTG (209 aa). The stretch at 393–527 forms a coiled coil; the sequence is IDLVDEAAAK…LETQLAEQQT (135 aa). The segment at 561-772 is NBD2; that stretch reads EKEKLLHLED…RVDETIIFHG (212 aa). Position 611-618 (611-618) interacts with ATP; that stretch reads GPTGVGKT. Residues 773 to 872 are C-terminal; that stretch reads LQKSELRSIV…TSLRGDLVIV (100 aa).

This sequence belongs to the ClpA/ClpB family. In terms of assembly, homohexamer. The oligomerization is ATP-dependent.

Its subcellular location is the cytoplasm. Part of a stress-induced multi-chaperone system, it is involved in the recovery of the cell from heat-induced damage, in cooperation with DnaK, DnaJ and GrpE. Acts before DnaK, in the processing of protein aggregates. Protein binding stimulates the ATPase activity; ATP hydrolysis unfolds the denatured protein aggregates, which probably helps expose new hydrophobic binding sites on the surface of ClpB-bound aggregates, contributing to the solubilization and refolding of denatured protein aggregates by DnaK. This chain is Chaperone protein ClpB 2 (clpB2), found in Synechocystis sp. (strain ATCC 27184 / PCC 6803 / Kazusa).